Consider the following 377-residue polypeptide: Alanine racemase (377 aa).

The active-site Proton acceptor; specific for D-alanine is the lysine 39. At lysine 39 the chain carries N6-(pyridoxal phosphate)lysine. Arginine 137 is a substrate binding site. The active-site Proton acceptor; specific for L-alanine is the tyrosine 266. Substrate is bound at residue methionine 314.

The protein belongs to the alanine racemase family. It depends on pyridoxal 5'-phosphate as a cofactor.

The catalysed reaction is L-alanine = D-alanine. It participates in amino-acid biosynthesis; D-alanine biosynthesis; D-alanine from L-alanine: step 1/1. In terms of biological role, catalyzes the interconversion of L-alanine and D-alanine. May also act on other amino acids. This is Alanine racemase (alr) from Symbiobacterium thermophilum (strain DSM 24528 / JCM 14929 / IAM 14863 / T).